The sequence spans 400 residues: Riboflavin biosynthesis protein RibBA (400 aa).

The tract at residues 1–202 is DHBP synthase; it reads MTTFGTIEQA…IADLVMYRRR (202 aa). Residues 28 to 29, Asp33, 141 to 145, and Glu165 contribute to the D-ribulose 5-phosphate site; these read RE and RTGHT. Glu29 is a Mg(2+) binding site. His144 is a binding site for Mg(2+). The tract at residues 203–400 is GTP cyclohydrolase II; sequence TEKQVELVAE…KRDRMGHLLG (198 aa). 253-257 serves as a coordination point for GTP; it reads RAHSE. Zn(2+)-binding residues include Cys258, Cys269, and Cys271. Residues Gln274, 297–299, and Thr319 each bind GTP; that span reads EGR. The Proton acceptor; for GTP cyclohydrolase activity role is filled by Asp331. The Nucleophile; for GTP cyclohydrolase activity role is filled by Arg333. 2 residues coordinate GTP: Thr354 and Lys359.

In the N-terminal section; belongs to the DHBP synthase family. This sequence in the C-terminal section; belongs to the GTP cyclohydrolase II family. Mg(2+) is required as a cofactor. Mn(2+) serves as cofactor. Requires Zn(2+) as cofactor.

The catalysed reaction is D-ribulose 5-phosphate = (2S)-2-hydroxy-3-oxobutyl phosphate + formate + H(+). The enzyme catalyses GTP + 4 H2O = 2,5-diamino-6-hydroxy-4-(5-phosphoribosylamino)-pyrimidine + formate + 2 phosphate + 3 H(+). The protein operates within cofactor biosynthesis; riboflavin biosynthesis; 2-hydroxy-3-oxobutyl phosphate from D-ribulose 5-phosphate: step 1/1. It functions in the pathway cofactor biosynthesis; riboflavin biosynthesis; 5-amino-6-(D-ribitylamino)uracil from GTP: step 1/4. Its function is as follows. Catalyzes the conversion of D-ribulose 5-phosphate to formate and 3,4-dihydroxy-2-butanone 4-phosphate. In terms of biological role, catalyzes the conversion of GTP to 2,5-diamino-6-ribosylamino-4(3H)-pyrimidinone 5'-phosphate (DARP), formate and pyrophosphate. This chain is Riboflavin biosynthesis protein RibBA, found in Salinispora tropica (strain ATCC BAA-916 / DSM 44818 / JCM 13857 / NBRC 105044 / CNB-440).